We begin with the raw amino-acid sequence, 364 residues long: Lipid-A-disaccharide synthase (364 aa).

It belongs to the LpxB family.

The enzyme catalyses a lipid X + a UDP-2-N,3-O-bis[(3R)-3-hydroxyacyl]-alpha-D-glucosamine = a lipid A disaccharide + UDP + H(+). Its pathway is bacterial outer membrane biogenesis; LPS lipid A biosynthesis. In terms of biological role, condensation of UDP-2,3-diacylglucosamine and 2,3-diacylglucosamine-1-phosphate to form lipid A disaccharide, a precursor of lipid A, a phosphorylated glycolipid that anchors the lipopolysaccharide to the outer membrane of the cell. This Campylobacter jejuni (strain RM1221) protein is Lipid-A-disaccharide synthase.